The primary structure comprises 348 residues: Mannonate dehydratase (348 aa).

Belongs to the mannonate dehydratase family. Fe(2+) serves as cofactor. Mn(2+) is required as a cofactor.

The catalysed reaction is D-mannonate = 2-dehydro-3-deoxy-D-gluconate + H2O. Its pathway is carbohydrate metabolism; pentose and glucuronate interconversion. Catalyzes the dehydration of D-mannonate. This chain is Mannonate dehydratase, found in Streptococcus uberis (strain ATCC BAA-854 / 0140J).